Here is a 306-residue protein sequence, read N- to C-terminus: tRNA dimethylallyltransferase (306 aa).

Residue 14–21 (GPTAAGKS) participates in ATP binding. 16 to 21 (TAAGKS) is a binding site for substrate. The tract at residues 39-42 (DSRL) is interaction with substrate tRNA.

The protein belongs to the IPP transferase family. Monomer. Requires Mg(2+) as cofactor.

The catalysed reaction is adenosine(37) in tRNA + dimethylallyl diphosphate = N(6)-dimethylallyladenosine(37) in tRNA + diphosphate. Its function is as follows. Catalyzes the transfer of a dimethylallyl group onto the adenine at position 37 in tRNAs that read codons beginning with uridine, leading to the formation of N6-(dimethylallyl)adenosine (i(6)A). This Synechococcus elongatus (strain ATCC 33912 / PCC 7942 / FACHB-805) (Anacystis nidulans R2) protein is tRNA dimethylallyltransferase.